A 40-amino-acid polypeptide reads, in one-letter code: Chaperonin HSP60, mitochondrial (40 aa).

It belongs to the chaperonin (HSP60) family.

The protein resides in the mitochondrion. Its function is as follows. Implicated in mitochondrial protein import and macromolecular assembly. May facilitate the correct folding of imported proteins. May also prevent misfolding and promote the refolding and proper assembly of unfolded polypeptides generated under stress conditions in the mitochondrial matrix. This Solanum tuberosum (Potato) protein is Chaperonin HSP60, mitochondrial.